A 242-amino-acid polypeptide reads, in one-letter code: Ubiquinone biosynthesis O-methyltransferase (242 aa).

S-adenosyl-L-methionine is bound by residues R44, G64, D85, and M129.

The protein belongs to the methyltransferase superfamily. UbiG/COQ3 family.

It catalyses the reaction a 3-demethylubiquinol + S-adenosyl-L-methionine = a ubiquinol + S-adenosyl-L-homocysteine + H(+). The enzyme catalyses a 3-(all-trans-polyprenyl)benzene-1,2-diol + S-adenosyl-L-methionine = a 2-methoxy-6-(all-trans-polyprenyl)phenol + S-adenosyl-L-homocysteine + H(+). Its pathway is cofactor biosynthesis; ubiquinone biosynthesis. O-methyltransferase that catalyzes the 2 O-methylation steps in the ubiquinone biosynthetic pathway. In Salmonella choleraesuis (strain SC-B67), this protein is Ubiquinone biosynthesis O-methyltransferase.